Here is a 489-residue protein sequence, read N- to C-terminus: COX3 mRNA-specific translational activator PET494 (489 aa).

The protein resides in the mitochondrion inner membrane. Required for the expression of the mitochondrial gene for cytochrome c oxidase subunit III (COX3). The sequence is that of COX3 mRNA-specific translational activator PET494 (PET494) from Saccharomyces cerevisiae (strain ATCC 204508 / S288c) (Baker's yeast).